A 524-amino-acid chain; its full sequence is N-acetylgalactosamine-6-sulfatase (524 aa).

The signal sequence occupies residues 1–27 (MTACSTAIRAQQLLLPVLSALGLLAAG). The segment at 28–381 (APQPPNIVLL…PTMLQGHIID (354 aa)) is catalytic domain. Positions 40, 41, and 80 each coordinate Ca(2+). Cys80 acts as the Nucleophile in catalysis. Cys80 bears the 3-oxoalanine (Cys) mark. His143 is an active-site residue. Asn205 carries N-linked (GlcNAc...) asparagine glycosylation. Ca(2+) is bound by residues Asp290 and Asn291. A disulfide bond links Cys310 and Cys421. A glycan (N-linked (GlcNAc...) asparagine) is linked at Asn425. Intrachain disulfides connect Cys491–Cys520 and Cys503–Cys509.

Belongs to the sulfatase family. As to quaternary structure, homodimer. Requires Ca(2+) as cofactor. The conversion to 3-oxoalanine (also known as C-formylglycine, FGly), of a serine or cysteine residue in prokaryotes and of a cysteine residue in eukaryotes, is critical for catalytic activity.

It localises to the lysosome. The enzyme catalyses Hydrolysis of the 6-sulfate groups of the N-acetyl-D-galactosamine 6-sulfate units of chondroitin sulfate and of the D-galactose 6-sulfate units of keratan sulfate.. In Rattus norvegicus (Rat), this protein is N-acetylgalactosamine-6-sulfatase (Galns).